The following is a 736-amino-acid chain: Gephyrin (736 aa).

The tract at residues 14 to 153 (QIRVGVLTVS…LPGSKKGSQE (140 aa)) is MPT Mo-transferase. 2 disordered regions span residues 181–232 (DELE…DSSS) and 260–290 (TASL…PKVQ). Positions 187-199 (PSPPPPLSPPPTT) are enriched in pro residues. The segment covering 261-290 (ASLSTTPSESPRAQATSRLSTASCPTPKVQ) has biased composition (polar residues). The MPT adenylyltransferase stretch occupies residues 294-736 (SSKENILRAS…VVDVMVIGRL (443 aa)).

This sequence in the N-terminal section; belongs to the MoaB/Mog family. In the C-terminal section; belongs to the MoeA family. As to quaternary structure, homotrimer, homodimer and homooligomer. Interacts with glycine receptors. Mg(2+) serves as cofactor.

The protein localises to the postsynaptic cell membrane. It is found in the cell membrane. It localises to the cytoplasm. The protein resides in the cytosol. Its subcellular location is the cytoskeleton. The protein localises to the cell projection. It is found in the dendrite. It localises to the postsynaptic density. It catalyses the reaction molybdopterin + ATP + H(+) = adenylyl-molybdopterin + diphosphate. The enzyme catalyses adenylyl-molybdopterin + molybdate = Mo-molybdopterin + AMP + H(+). It participates in cofactor biosynthesis; molybdopterin biosynthesis. Microtubule-associated protein involved in membrane protein-cytoskeleton interactions. It is thought to anchor the inhibitory glycine receptor (GLYR) to subsynaptic microtubules. Acts as a major instructive molecule at inhibitory synapses, where it also clusters GABA type A receptors. Its function is as follows. Also has a catalytic activity and catalyzes two steps in the biosynthesis of the molybdenum cofactor. In the first step, molybdopterin is adenylated. Subsequently, molybdate is inserted into adenylated molybdopterin and AMP is released. In Gallus gallus (Chicken), this protein is Gephyrin (GPHN).